Here is a 175-residue protein sequence, read N- to C-terminus: tRNA (cytidine(56)-2'-O)-methyltransferase (175 aa).

Leu-82 contributes to the S-adenosyl-L-methionine binding site.

This sequence belongs to the aTrm56 family. As to quaternary structure, homodimer.

Its subcellular location is the cytoplasm. The catalysed reaction is cytidine(56) in tRNA + S-adenosyl-L-methionine = 2'-O-methylcytidine(56) in tRNA + S-adenosyl-L-homocysteine + H(+). Its function is as follows. Specifically catalyzes the AdoMet-dependent 2'-O-ribose methylation of cytidine at position 56 in tRNAs. The polypeptide is tRNA (cytidine(56)-2'-O)-methyltransferase (Cenarchaeum symbiosum (strain A)).